We begin with the raw amino-acid sequence, 187 residues long: Peptidyl-tRNA hydrolase (187 aa).

Residue Y15 participates in tRNA binding. The active-site Proton acceptor is the H20. TRNA-binding residues include F65, N67, and N113.

This sequence belongs to the PTH family. As to quaternary structure, monomer.

The protein resides in the cytoplasm. It carries out the reaction an N-acyl-L-alpha-aminoacyl-tRNA + H2O = an N-acyl-L-amino acid + a tRNA + H(+). Functionally, hydrolyzes ribosome-free peptidyl-tRNAs (with 1 or more amino acids incorporated), which drop off the ribosome during protein synthesis, or as a result of ribosome stalling. In terms of biological role, catalyzes the release of premature peptidyl moieties from peptidyl-tRNA molecules trapped in stalled 50S ribosomal subunits, and thus maintains levels of free tRNAs and 50S ribosomes. The protein is Peptidyl-tRNA hydrolase of Elusimicrobium minutum (strain Pei191).